Here is a 426-residue protein sequence, read N- to C-terminus: 5-hydroxybenzimidazole synthase BzaB (426 aa).

Residues Met-95, Tyr-124, His-163, 185–187, 226–229, and Glu-265 each bind substrate; these read SRG and DAIR. His-269 serves as a coordination point for Zn(2+). Residue Phe-292 coordinates substrate. Residue His-333 coordinates Zn(2+). [4Fe-4S] cluster-binding residues include Cys-407, Cys-410, and Cys-414.

Belongs to the ThiC family. 5-hydroxybenzimidazole synthase subfamily. The cofactor is [4Fe-4S] cluster.

It catalyses the reaction 5-amino-1-(5-phospho-beta-D-ribosyl)imidazole + AH2 + S-adenosyl-L-methionine = 5-hydroxybenzimidazole + 5'-deoxyadenosine + formate + L-methionine + A + NH4(+) + phosphate + 2 H(+). In terms of biological role, together with BzaA, probably catalyzes the conversion of aminoimidazole ribotide (AIR) to 5-hydroxybenzimidazole (5-HBI) in a radical S-adenosyl-L-methionine (SAM)-dependent reaction. Is thus involved in the anaerobic biosynthesis of the benzimidazole lower axial ligand of the cobamide produced by M.thermoacetica. Requires BzaA for catalytic activity, as BzaB alone displays no activity. The polypeptide is 5-hydroxybenzimidazole synthase BzaB (Moorella thermoacetica (strain ATCC 39073 / JCM 9320)).